A 211-amino-acid polypeptide reads, in one-letter code: Redox-sensing transcriptional repressor Rex (211 aa).

The H-T-H motif DNA-binding region spans 16-55 (LYYRYLLILNEEGKDKVSSTELSEAVQVDSASIRRDFSYF). NAD(+) is bound at residue 90-95 (GVGNLG).

This sequence belongs to the transcriptional regulatory Rex family. Homodimer.

It is found in the cytoplasm. Functionally, modulates transcription in response to changes in cellular NADH/NAD(+) redox state. The protein is Redox-sensing transcriptional repressor Rex of Lactobacillus acidophilus (strain ATCC 700396 / NCK56 / N2 / NCFM).